A 224-amino-acid chain; its full sequence is MRREISFLLQPRCLLLLVALTIFLVFALFNTGKDEEKQVIEDHEITNRVFLDVDIDGQRLGRIVIGLYGTVVPKTVENFRALCTGEKGKTSSGKPLHYKGTPFHRIISGFVIQGGDIIHGDGKSSDSIYGGTFPDENFKIQHSHAGMVAMANTGPDSNGSQFFITTVKASWLEGEHVVLGKVIQGMDNVFAIEGGAGTYSGKPRKKVVIADSGEIPKDKWDEER.

Positions 1-27 are cleaved as a signal peptide; sequence MRREISFLLQPRCLLLLVALTIFLVFA. In terms of domain architecture, PPIase cyclophilin-type spans 50–214; the sequence is FLDVDIDGQR…KKVVIADSGE (165 aa). Residue Asn-158 is glycosylated (N-linked (GlcNAc...) asparagine).

It belongs to the cyclophilin-type PPIase family. As to expression, ubiquitous.

It is found in the endoplasmic reticulum. The enzyme catalyses [protein]-peptidylproline (omega=180) = [protein]-peptidylproline (omega=0). In terms of biological role, PPIases accelerate the folding of proteins. It catalyzes the cis-trans isomerization of proline imidic peptide bonds in oligopeptides. The chain is Peptidyl-prolyl cis-trans isomerase CYP21-1 (CYP21-1) from Arabidopsis thaliana (Mouse-ear cress).